The chain runs to 348 residues: Ion-translocating oxidoreductase complex subunit D (348 aa).

A run of 4 helical transmembrane segments spans residues 23–43 (WVLA…GYGT), 44–64 (LIQL…IMLL), 72–91 (ALRD…AIPP), and 126–146 (IAYV…MAPI). FMN phosphoryl threonine is present on Thr-187. The next 5 helical transmembrane spans lie at 214–234 (FAGI…LILL), 243–263 (IPMA…LFAP), 266–286 (TASP…FFIA), 300–320 (LIYG…GGFP), and 321–341 (DGVA…DYYT).

This sequence belongs to the NqrB/RnfD family. The complex is composed of six subunits: RnfA, RnfB, RnfC, RnfD, RnfE and RnfG. It depends on FMN as a cofactor.

Its subcellular location is the cell inner membrane. Part of a membrane-bound complex that couples electron transfer with translocation of ions across the membrane. The polypeptide is Ion-translocating oxidoreductase complex subunit D (Vibrio cholerae serotype O1 (strain ATCC 39315 / El Tor Inaba N16961)).